We begin with the raw amino-acid sequence, 332 residues long: Beta-chimaerin (332 aa).

The segment at 78–128 (THNFKVHTFRGPHWCEYCANFMWGLIAQGVRCSDCGLNVHKQCSKHVPNDC) adopts a Phorbol-ester/DAG-type zinc-finger fold. Residues 141-332 (CDLTTLVKAH…ILIENEDVLF (192 aa)) form the Rho-GAP domain.

It is found in the membrane. In the inactive state, the N terminus protrudes into the active site of the Rho-GAP domain, sterically blocking Rac binding. Phospholipid binding to the Phorbol-ester/DAG-type zinc-finger/C1 domain triggers the cooperative dissociation of these interactions, allowing the N-terminus to move out of the active site and thereby activating the enzyme. Functionally, GTPase-activating protein for p21-rac. This is Beta-chimaerin (Chn2) from Mus musculus (Mouse).